Consider the following 656-residue polypeptide: Chaperone protein HtpG (656 aa).

The tract at residues 1–364 (MSEQNPTDSK…SADLPLNVSR (364 aa)) is a; substrate-binding. The interval 365–583 (EILQESRDVK…EGELSPQMIQ (219 aa)) is b. The interval 584–656 (MLKQMGQDVP…LRRVNELLMK (73 aa)) is c.

The protein belongs to the heat shock protein 90 family. Homodimer.

The protein resides in the cytoplasm. Functionally, molecular chaperone. Has ATPase activity. The protein is Chaperone protein HtpG of Psychrobacter arcticus (strain DSM 17307 / VKM B-2377 / 273-4).